The chain runs to 102 residues: MYAVVKTGGKQYKVSEGDFLKVEKLEGAVGDTVEFSEILMVGGDKVVIGTPLVPSASVVGKIVEQGKDKKILVFKSKRRKNTRKLNGHRQLRTILMIEKINA.

Belongs to the bacterial ribosomal protein bL21 family. As to quaternary structure, part of the 50S ribosomal subunit. Contacts protein L20.

Its function is as follows. This protein binds to 23S rRNA in the presence of protein L20. This chain is Large ribosomal subunit protein bL21, found in Geobacter sp. (strain M21).